A 134-amino-acid polypeptide reads, in one-letter code: Cytochrome b5 isoform E (134 aa).

Residues 5 to 81 (RKVLSFEEVS…MDKYFIGEID (77 aa)) enclose the Cytochrome b5 heme-binding domain. Heme is bound by residues His-40 and His-64. A helical transmembrane segment spans residues 107-127 (FIIKILQFLVPILILGLALVV). Residues 128-134 (RHYTKKD) carry the AKR2A-binding sequence (ABS) required for endoplasmic reticulum membrane targeting motif.

This sequence belongs to the cytochrome b5 family. In terms of assembly, interacts with CER1, BI-1, FAH1 and FAH2. Interacts with AKR2A. Expressed in roots, stems, leaves, flowers and siliques.

The protein localises to the cell membrane. It localises to the endoplasmic reticulum membrane. Functionally, membrane bound hemoprotein which function as an electron carrier for several membrane bound oxygenases, including fatty acid desaturases. The protein is Cytochrome b5 isoform E (CYTB5-E) of Arabidopsis thaliana (Mouse-ear cress).